The sequence spans 950 residues: Serine/threonine-protein phosphatase 4 regulatory subunit 1 (950 aa).

HEAT repeat units lie at residues 1 to 25, 26 to 63, 65 to 81, 82 to 119, 127 to 164, 168 to 206, 208 to 246, 248 to 285, and 287 to 324; these read MADL…DYSS, ESDV…IFNR, MVAR…CDDE, RDCI…FCQE, AFSK…QELI, DVET…MVGK, ITER…VVGQ, ATEE…ATCQ, and IRRT…TFAN. Disordered regions lie at residues 326–374, 413–438, and 473–499; these read SSSG…SVSN, ESHQ…RPEV, and EQNS…SPNI. Over residues 332-365 the composition is skewed to basic and acidic residues; it reads FKEESKSSEEMSVENKNRTRDQEAPEDVQVRPED. HEAT repeat units follow at residues 505–542, 568–606, 698–734, 799–837, and 861–898; these read KELE…LDAH, INQE…FSPD, LTAA…LLHI, WISY…RCPK, and QFAV…EKDY. Serine 935 is subject to Phosphoserine.

In terms of assembly, serine/threonine-protein phosphatase 4 (PP4) occurs in different assemblies of the catalytic and one or more regulatory subunits. Component of the PP4 complex PPP4C-PPP4R1. Interacts with HDAC3. (Microbial infection) Interacts with merkel polyomavirus small tumor antigen; this interaction bridges small tumor antigen with NEMO to inhibit NF-kappa-B. In terms of tissue distribution, widely expressed with high expression in cultured mesangial cells. Isoform 1 and isoform 2 are expressed in renal tissues.

Its function is as follows. Regulatory subunit of serine/threonine-protein phosphatase 4. May play a role in regulation of cell division in renal glomeruli. The PPP4C-PPP4R1 PP4 complex may play a role in dephosphorylation and regulation of HDAC3. Plays a role in the inhibition of TNF-induced NF-kappa-B activation by regulating the dephosphorylation of TRAF2. In terms of biological role, (Microbial infection) Participates in merkel polyomavirus-mediated inhibition of NF-kappa-B by bridging viral small tumor antigen with NEMO. This Homo sapiens (Human) protein is Serine/threonine-protein phosphatase 4 regulatory subunit 1 (PPP4R1).